We begin with the raw amino-acid sequence, 122 residues long: Large ribosomal subunit protein uL14 (122 aa).

Belongs to the universal ribosomal protein uL14 family. As to quaternary structure, part of the 50S ribosomal subunit. Forms a cluster with proteins L3 and L19. In the 70S ribosome, L14 and L19 interact and together make contacts with the 16S rRNA in bridges B5 and B8.

Functionally, binds to 23S rRNA. Forms part of two intersubunit bridges in the 70S ribosome. The polypeptide is Large ribosomal subunit protein uL14 (Endomicrobium trichonymphae).